The following is a 98-amino-acid chain: Dehydrin HIRD11 (98 aa).

The interval 1–98 (MAGLINKIGD…HSSSSDSDSD (98 aa)) is disordered. Positions 19–72 (KEGEHKKEEEHKKHVDEHKSGEHKEGIVDKIKDKIHGGEGKSHDGEGKSHDGEK) are enriched in basic and acidic residues. A compositionally biased stretch (basic residues) spans 73–82 (KKKKDKKEKK).

It belongs to the KS-type dehydrin family. Interacts with PXL1. In terms of processing, phosphorylated in vivo. Phosphorylated in vitro by PXL1. Highly expressed in the cambial zone of the stem vasculature (at protein level). Expressed in roots, rosettes leaves, stems, cauline leaves, flowers and siliques.

The protein resides in the cytoplasm. The protein localises to the nucleus. Functionally, intrinsically disordered and metal-binding protein. Binds to the divalent cations cobalt, nickel, copper and zinc, but not to magnesium, calcium, manganese or cadmium. Binding to metal ions decreases disordered state, decreases susceptibility to trypsin and promotes self-association. Can reduce the formation of reactive oxygen species (ROS) in a copper-ascorbate in vitro system. This is Dehydrin HIRD11 from Arabidopsis thaliana (Mouse-ear cress).